The sequence spans 414 residues: Nucleoredoxin (414 aa).

The Thioredoxin domain maps to 131–305 (LLVKDDPEGL…ELNAVQLNEG (175 aa)).

Belongs to the nucleoredoxin family.

It localises to the cytoplasm. The protein resides in the cytosol. It is found in the nucleus. It catalyses the reaction [protein]-dithiol + NAD(+) = [protein]-disulfide + NADH + H(+). The enzyme catalyses [protein]-dithiol + NADP(+) = [protein]-disulfide + NADPH + H(+). In terms of biological role, functions as a redox-dependent negative regulator of the Wnt signaling pathway. In Xenopus laevis (African clawed frog), this protein is Nucleoredoxin (nxn).